We begin with the raw amino-acid sequence, 129 residues long: Azurin-2 (129 aa).

Residues 1–129 (AQCEATVESN…MMKGTLKLGS (129 aa)) form the Plastocyanin-like domain. The cysteines at positions 3 and 26 are disulfide-linked. Cu cation is bound by residues His46, Cys112, His117, and Met121.

Its subcellular location is the periplasm. Transfers electrons from cytochrome c551 to cytochrome oxidase. This chain is Azurin-2, found in Alcaligenes xylosoxydans xylosoxydans (Achromobacter xylosoxidans).